Consider the following 180-residue polypeptide: ADP-ribosylation factor 4 (180 aa).

Gly2 carries N-myristoyl glycine lipidation. GTP-binding positions include 24 to 31, 67 to 71, and 126 to 129; these read GLDAAGKT, DVGGQ, and NKQD.

Belongs to the small GTPase superfamily. Arf family.

It localises to the golgi apparatus. In terms of biological role, GTP-binding protein involved in protein trafficking; may modulate vesicle budding and uncoating within the Golgi apparatus. May be involved in ciliogenesis. The sequence is that of ADP-ribosylation factor 4 (arf4) from Xenopus laevis (African clawed frog).